The sequence spans 117 residues: Protein TCL1B2 (117 aa).

It belongs to the TCL1 family.

In Mus musculus (Mouse), this protein is Protein TCL1B2 (Tcl1b2).